The following is a 126-amino-acid chain: Arginine decarboxylase proenzyme (126 aa).

Catalysis depends on Ser-74, which acts as the Schiff-base intermediate with substrate; via pyruvic acid. Ser-74 carries the pyruvic acid (Ser); by autocatalysis modification. Catalysis depends on His-79, which acts as the Proton acceptor; for processing activity. The Proton donor; for catalytic activity role is filled by Cys-94.

This sequence belongs to the prokaryotic AdoMetDC family. Type 1 subfamily. As to quaternary structure, heterooctamer of four alpha and four beta chains arranged as a tetramer of alpha/beta heterodimers. It depends on pyruvate as a cofactor. Post-translationally, is synthesized initially as an inactive proenzyme. Formation of the active enzyme involves a self-maturation process in which the active site pyruvoyl group is generated from an internal serine residue via an autocatalytic post-translational modification. Two non-identical subunits are generated from the proenzyme in this reaction, and the pyruvate is formed at the N-terminus of the alpha chain, which is derived from the carboxyl end of the proenzyme. The post-translation cleavage follows an unusual pathway, termed non-hydrolytic serinolysis, in which the side chain hydroxyl group of the serine supplies its oxygen atom to form the C-terminus of the beta chain, while the remainder of the serine residue undergoes an oxidative deamination to produce ammonia and the pyruvoyl group blocking the N-terminus of the alpha chain.

The catalysed reaction is L-arginine + H(+) = agmatine + CO2. It functions in the pathway amine and polyamine biosynthesis; agmatine biosynthesis; agmatine from L-arginine: step 1/1. Its function is as follows. Specifically catalyzes the decarboxylation of L-arginine to agmatine. Has no S-adenosylmethionine decarboxylase (AdoMetDC) activity. The polypeptide is Arginine decarboxylase proenzyme (Pyrobaculum neutrophilum (strain DSM 2338 / JCM 9278 / NBRC 100436 / V24Sta) (Thermoproteus neutrophilus)).